Here is a 362-residue protein sequence, read N- to C-terminus: Chorismate synthase (362 aa).

An NADP(+)-binding site is contributed by Arg47. FMN contacts are provided by residues 124 to 126 (RAS), Gly286, 301 to 305 (KPTAT), and Arg327.

It belongs to the chorismate synthase family. In terms of assembly, homotetramer. FMNH2 serves as cofactor.

The catalysed reaction is 5-O-(1-carboxyvinyl)-3-phosphoshikimate = chorismate + phosphate. It functions in the pathway metabolic intermediate biosynthesis; chorismate biosynthesis; chorismate from D-erythrose 4-phosphate and phosphoenolpyruvate: step 7/7. Its function is as follows. Catalyzes the anti-1,4-elimination of the C-3 phosphate and the C-6 proR hydrogen from 5-enolpyruvylshikimate-3-phosphate (EPSP) to yield chorismate, which is the branch point compound that serves as the starting substrate for the three terminal pathways of aromatic amino acid biosynthesis. This reaction introduces a second double bond into the aromatic ring system. The chain is Chorismate synthase from Prochlorococcus marinus (strain SARG / CCMP1375 / SS120).